The sequence spans 642 residues: Fork head protein homolog 2 (642 aa).

The disordered stretch occupies residues 1-23 (MTVRRLESKSEHISDDEERKEQL). One can recognise an FHA domain in the interval 96–160 (IILGREPANP…NGIKVDGKLF (65 aa)). The segment at residues 223–318 (KPPYSYSVMI…AKTRKTPRKR (96 aa)) is a DNA-binding region (fork-head). The span at 310–319 (KTRKTPRKRS) shows a compositional bias: basic residues. 3 disordered regions span residues 310–392 (KTRK…ETYK), 519–574 (VSDS…TEEN), and 586–642 (ATME…KSSA). Phosphoserine is present on residues Ser319, Ser321, Ser322, Ser334, and Ser336. Residues 348–362 (TSIPAAEPASSTTSA) are compositionally biased toward low complexity. Polar residues-rich tracts occupy residues 363–381 (RDQT…TAET), 519–552 (VSDS…SANK), and 599–642 (TPTS…KSSA). Ser375, Ser535, and Ser626 each carry phosphoserine.

Post-translationally, phosphorylated. Occurs periodically during mitosis.

The protein resides in the nucleus. Required for promoter sequence element PCB-driven, M-phase-specific transcription. Acts as a transcriptional activator with a role in the regulation of mitosis. Binds, cooperatively with mcm1, the CLB cluster regulatory elements throughout the cell cycle. Regulates the periodic transcription of cdc15 and spo12. Required for the correct timing, positioning and contraction of the division septum. This chain is Fork head protein homolog 2 (fkh2), found in Schizosaccharomyces pombe (strain 972 / ATCC 24843) (Fission yeast).